Consider the following 158-residue polypeptide: Transcription elongation factor GreA (158 aa).

It belongs to the GreA/GreB family.

Its function is as follows. Necessary for efficient RNA polymerase transcription elongation past template-encoded arresting sites. The arresting sites in DNA have the property of trapping a certain fraction of elongating RNA polymerases that pass through, resulting in locked ternary complexes. Cleavage of the nascent transcript by cleavage factors such as GreA or GreB allows the resumption of elongation from the new 3'terminus. GreA releases sequences of 2 to 3 nucleotides. This chain is Transcription elongation factor GreA, found in Salmonella typhi.